Reading from the N-terminus, the 280-residue chain is 4-diphosphocytidyl-2-C-methyl-D-erythritol kinase (280 aa).

Residue Lys8 is part of the active site. 91–101 (PVSAGLAGGST) provides a ligand contact to ATP. The active site involves Asp133.

The protein belongs to the GHMP kinase family. IspE subfamily.

The enzyme catalyses 4-CDP-2-C-methyl-D-erythritol + ATP = 4-CDP-2-C-methyl-D-erythritol 2-phosphate + ADP + H(+). The protein operates within isoprenoid biosynthesis; isopentenyl diphosphate biosynthesis via DXP pathway; isopentenyl diphosphate from 1-deoxy-D-xylulose 5-phosphate: step 3/6. Functionally, catalyzes the phosphorylation of the position 2 hydroxy group of 4-diphosphocytidyl-2C-methyl-D-erythritol. In Clostridium beijerinckii (strain ATCC 51743 / NCIMB 8052) (Clostridium acetobutylicum), this protein is 4-diphosphocytidyl-2-C-methyl-D-erythritol kinase.